The primary structure comprises 217 residues: MLSILILAATAAGLVILLFQRLWTVLGPHHVTPRESLRLLIVAGSGGHTTEILRLVGSLSNAYSPRHYVIAESDEMSAKKIHSLEELSRAQNDSTTEYPKYHLHRIPRSREVRQSWLSSVFTTFYSMWFSFPLVLRIKPDLVLCNGPGTCVPICVSALLLGILGVKKVIIVYVESICRVETLSLSGKILRHLSDYFIVQWPTLKEKYPKSVYLGRIV.

Over 1 to 3 the chain is Lumenal; sequence MLS. Residues 4–26 traverse the membrane as a helical segment; that stretch reads ILILAATAAGLVILLFQRLWTVL. The Cytoplasmic portion of the chain corresponds to 27–217; that stretch reads GPHHVTPRES…PKSVYLGRIV (191 aa).

The protein belongs to the ALG14 family. As to quaternary structure, forms with ALG13 the active heterodimeric UDP-N-acetylglucosamine transferase complex.

It localises to the endoplasmic reticulum membrane. Functionally, part of the UDP-N-acetylglucosamine transferase complex that operates in the biosynthetic pathway of dolichol-linked oligosaccharides, the glycan precursors employed in protein asparagine (N)-glycosylation. The assembly of dolichol-linked oligosaccharides begins on the cytosolic side of the endoplasmic reticulum membrane and finishes in its lumen. The sequential addition of sugars to dolichol pyrophosphate produces dolichol-linked oligosaccharides containing fourteen sugars, including two GlcNAcs, nine mannoses and three glucoses. Once assembled, the oligosaccharides are transferred from the lipid to nascent proteins by oligosaccharyltransferases. Functions as a protein-membrane adapter recruiting ALG13 at the cytoplasmic face of the endoplasmic reticulum, where the complex catalyzes the second step of dolichol pyrophosphate biosynthesis, transferring a beta1,4-linked N-acetylglucosamine (GlcNAc) from UDP-GlcNAc to GlcNAc-pyrophosphatedolichol (Gn-PDol) to produce N,N'-diacetylchitobiosyl diphosphodolichol. N,N'-diacetylchitobiosyl diphosphodolichol is a substrate for ALG1, the following enzyme in the biosynthetic pathway. This is UDP-N-acetylglucosamine transferase subunit ALG14 from Mus musculus (Mouse).